A 401-amino-acid polypeptide reads, in one-letter code: Proline-rich protein 30 (401 aa).

The span at 69–80 (PGPHFSSDSNSD) shows a compositional bias: polar residues. Disordered stretches follow at residues 69–93 (PGPH…PRSS), 129–191 (SSSL…RGAG), and 357–401 (QSPK…KSPS). Composition is skewed to low complexity over residues 83–93 (PPHSSSHPRSS) and 129–147 (SSSL…QSPS). 2 stretches are compositionally biased toward polar residues: residues 148-186 (RLQD…SIKS) and 357-368 (QSPKPSQCSRSL).

In Mus musculus (Mouse), this protein is Proline-rich protein 30 (Prr30).